A 416-amino-acid polypeptide reads, in one-letter code: Probable pectate lyase 8 (416 aa).

Residues 1–24 (MAVTKLILFASALLLTALFIGVNA) form the signal peptide. Residues Asn23, Asn28, and Asn52 are each glycosylated (N-linked (GlcNAc...) asparagine). Residues Asp214, Asp238, and Asp242 each coordinate Ca(2+). Arg294 is an active-site residue.

It belongs to the polysaccharide lyase 1 family. Ca(2+) serves as cofactor.

The enzyme catalyses Eliminative cleavage of (1-&gt;4)-alpha-D-galacturonan to give oligosaccharides with 4-deoxy-alpha-D-galact-4-enuronosyl groups at their non-reducing ends.. It participates in glycan metabolism; pectin degradation; 2-dehydro-3-deoxy-D-gluconate from pectin: step 2/5. The chain is Probable pectate lyase 8 from Arabidopsis thaliana (Mouse-ear cress).